The primary structure comprises 150 residues: Regulatory protein RecX (150 aa).

It belongs to the RecX family.

It localises to the cytoplasm. Its function is as follows. Modulates RecA activity. This is Regulatory protein RecX from Acidithiobacillus ferrooxidans (strain ATCC 23270 / DSM 14882 / CIP 104768 / NCIMB 8455) (Ferrobacillus ferrooxidans (strain ATCC 23270)).